Reading from the N-terminus, the 421-residue chain is Serine--tRNA ligase (421 aa).

229-231 (TSE) provides a ligand contact to L-serine. Residue 260-262 (RRE) participates in ATP binding. Glu-283 is a binding site for L-serine. 347 to 350 (EISS) lines the ATP pocket. Ser-381 contributes to the L-serine binding site.

Belongs to the class-II aminoacyl-tRNA synthetase family. Type-1 seryl-tRNA synthetase subfamily. Homodimer. The tRNA molecule binds across the dimer.

The protein localises to the cytoplasm. It carries out the reaction tRNA(Ser) + L-serine + ATP = L-seryl-tRNA(Ser) + AMP + diphosphate + H(+). It catalyses the reaction tRNA(Sec) + L-serine + ATP = L-seryl-tRNA(Sec) + AMP + diphosphate + H(+). The protein operates within aminoacyl-tRNA biosynthesis; selenocysteinyl-tRNA(Sec) biosynthesis; L-seryl-tRNA(Sec) from L-serine and tRNA(Sec): step 1/1. Catalyzes the attachment of serine to tRNA(Ser). Is also able to aminoacylate tRNA(Sec) with serine, to form the misacylated tRNA L-seryl-tRNA(Sec), which will be further converted into selenocysteinyl-tRNA(Sec). In Fusobacterium nucleatum subsp. nucleatum (strain ATCC 25586 / DSM 15643 / BCRC 10681 / CIP 101130 / JCM 8532 / KCTC 2640 / LMG 13131 / VPI 4355), this protein is Serine--tRNA ligase.